We begin with the raw amino-acid sequence, 215 residues long: Peroxiredoxin 1 (215 aa).

The 156-residue stretch at 2-157 (KLLGEKFPSM…ILRALKALQT (156 aa)) folds into the Thioredoxin domain. Cys-44 functions as the Cysteine sulfenic acid (-SOH) intermediate in the catalytic mechanism. Position 120 (Arg-120) interacts with substrate.

The protein belongs to the peroxiredoxin family. Prx6 subfamily. In terms of assembly, homodecamer. Pentamer of dimers that assemble into a ring structure.

Its subcellular location is the cytoplasm. It catalyses the reaction a hydroperoxide + [thioredoxin]-dithiol = an alcohol + [thioredoxin]-disulfide + H2O. Its function is as follows. Thiol-specific peroxidase that catalyzes the reduction of hydrogen peroxide and organic hydroperoxides to water and alcohols, respectively. Plays a role in cell protection against oxidative stress by detoxifying peroxides. The polypeptide is Peroxiredoxin 1 (Caldanaerobacter subterraneus subsp. tengcongensis (strain DSM 15242 / JCM 11007 / NBRC 100824 / MB4) (Thermoanaerobacter tengcongensis)).